Consider the following 589-residue polypeptide: Formate--tetrahydrofolate ligase (589 aa).

Residue Thr74–Ser81 participates in ATP binding.

This sequence belongs to the formate--tetrahydrofolate ligase family.

It catalyses the reaction (6S)-5,6,7,8-tetrahydrofolate + formate + ATP = (6R)-10-formyltetrahydrofolate + ADP + phosphate. The protein operates within one-carbon metabolism; tetrahydrofolate interconversion. This is Formate--tetrahydrofolate ligase from Thermodesulfovibrio yellowstonii (strain ATCC 51303 / DSM 11347 / YP87).